A 145-amino-acid chain; its full sequence is Cell wall synthesis protein CwsA (145 aa).

The helical transmembrane segment at 104–124 threads the bilayer; it reads WIFAGIAAAILAGGAVAFSIV.

The protein belongs to the CwsA family.

The protein localises to the cell membrane. Its function is as follows. Required for regulated cell division, cell wall synthesis and the maintenance of cell shape. This Mycobacterium bovis (strain ATCC BAA-935 / AF2122/97) protein is Cell wall synthesis protein CwsA.